The chain runs to 708 residues: ATP-dependent RNA helicase laf-1 (708 aa).

Positions 1–21 (MESNQSNNGGSGNAALNRGGR) are enriched in low complexity. The tract at residues 1-191 (MESNQSNNGG…RGTSKWENRG (191 aa)) is disordered. The segment covering 48 to 70 (GAGGGGYRRGGGNSGGGGGGGYD) has biased composition (gly residues). Composition is skewed to basic and acidic residues over residues 72 to 83 (GYNDNRDDRDNR) and 90 to 99 (GRDRNYEDRG). Positions 100 to 123 (YNGGGGGGGNRGYNNNRGGGGGGY) are enriched in gly residues. A Q motif motif is present at residues 231-259 (SLFSDLSLHEWIEENIKTAGYDRPTPVQK). The region spanning 262–453 (IPALQGGRDL…QDFLKENYVF (192 aa)) is the Helicase ATP-binding domain. 275 to 282 (AQTGSGKT) is a binding site for ATP. The short motif at 397-400 (DEAD) is the DEAD box element. The region spanning 465–626 (NIMQKIVWVE…ELPDWLEGMS (162 aa)) is the Helicase C-terminal domain. The tract at residues 623 to 708 (EGMSGDMRSG…RAQPQQDWWS (86 aa)) is disordered. 2 stretches are compositionally biased toward gly residues: residues 630–647 (RSGG…GQRF) and 656–692 (GGSG…GGGR). Positions 699-708 (RAQPQQDWWS) are enriched in polar residues.

This sequence belongs to the DEAD box helicase family. DDX3/DED1 subfamily. Binds RNA as a monomer at low laf-1 concentrations and as a dimer at high laf-1 concentrations. As to expression, expressed in the germline and soma of young adult hermaphrodites.

Its subcellular location is the cytoplasm. It is found in the cytoplasmic granule. The protein localises to the nucleus. It localises to the stress granule. The protein resides in the inflammasome. Its subcellular location is the cell membrane. It is found in the cell projection. The protein localises to the lamellipodium. It carries out the reaction ATP + H2O = ADP + phosphate + H(+). Its function is as follows. Multifunctional ATP-dependent RNA helicase. Plays a role in RNA remodeling, but is not required for RNA unwinding. Binds to RNA in a concentration-dependent manner to stimulate annealing between two complementary strands of RNA. This process is also dependent upon ATP; ATP reduces binding to RNA and subsequently diminishes RNA annealing. Involved in many cellular processes, which do not necessarily require its ATPase/helicase catalytic activities. Involved in the regulation of transcription and translation initiation. Involved in innate immunity. Involved in both stress and inflammatory responses. Promotes liquid-liquid phase separation of P granules, which is a process important for intracellular organization and stress granule assembly. Required for embryonic development. Plays a role in sexual cell fate determination by negatively regulating the translation of the sex determining protein tra-2. May play a protective role in the response to heat and oxidative stress. May negatively regulate extrinsic apoptotic signaling pathway via death domain receptors. May be involved in mitotic chromosome segregation. The polypeptide is ATP-dependent RNA helicase laf-1 (Caenorhabditis elegans).